A 276-amino-acid polypeptide reads, in one-letter code: Rhomboid protease GlpG (276 aa).

The next 6 helical transmembrane spans lie at 94-114 (AGPL…LMQI), 142-162 (ALLH…WYLG), 168-188 (VLGT…SGWA), 193-213 (SGTY…YVWL), 229-249 (LMAF…GMSI), and 250-270 (ANAA…WDTY). The active-site Nucleophile is the Ser201. Residue His254 is part of the active site.

The protein belongs to the peptidase S54 family.

Its subcellular location is the cell inner membrane. The enzyme catalyses Cleaves type-1 transmembrane domains using a catalytic dyad composed of serine and histidine that are contributed by different transmembrane domains.. In terms of biological role, rhomboid-type serine protease that catalyzes intramembrane proteolysis. In Pectobacterium atrosepticum (strain SCRI 1043 / ATCC BAA-672) (Erwinia carotovora subsp. atroseptica), this protein is Rhomboid protease GlpG.